The chain runs to 809 residues: Phenylalanine--tRNA ligase beta subunit (809 aa).

Residues 39 to 152 (KDKWPNVYVG…ADAPVGMLAS (114 aa)) enclose the tRNA-binding domain. The B5 domain maps to 404 to 492 (KDRNSVVLSL…RIAGYDTIPC (89 aa)). Residues aspartate 470, aspartate 476, glutamate 479, and glutamate 480 each contribute to the Mg(2+) site. Positions 717–808 (NRFPSVERDL…LNTETGAVLR (92 aa)) constitute an FDX-ACB domain.

The protein belongs to the phenylalanyl-tRNA synthetase beta subunit family. Type 1 subfamily. Tetramer of two alpha and two beta subunits. The cofactor is Mg(2+).

It is found in the cytoplasm. The catalysed reaction is tRNA(Phe) + L-phenylalanine + ATP = L-phenylalanyl-tRNA(Phe) + AMP + diphosphate + H(+). In Dehalococcoides mccartyi (strain ATCC BAA-2266 / KCTC 15142 / 195) (Dehalococcoides ethenogenes (strain 195)), this protein is Phenylalanine--tRNA ligase beta subunit.